Consider the following 544-residue polypeptide: MAAKQVLFSDEARAKMLDGVNTLANAVKVTLGPKGRNVVLDKSFGAPTITKDGVSVAKEIELEDKFENMGAQIVKEVASKTADVAGDGTTTATVLAQALLTEGLKAVAAGMNPMDLKRGIDKATAKLVEELKALSKPCSDPKSIEQVGTISANSDATVGKLIADAMAKVGKEGVITVEEGKGFEDELDVVEGMQFDRGYLSPYFATNQENMTTDLENPYILIVDKKISNIRDLLPVLEGVSKSGRALLIIAEDVESEALATLVVNNMRGVVKVCAVKAPGFGDRRKAMLEDIATLTGATFVSEDLSMKLEETNMEHLGTASRVQVTKDNTTIIDGAGEKEAIAKRINVIKANIAEANSDYDREKLQERLAKLSGGVAVIKVGAVTEAEMKEKKDRVDDALHATRAAVEEGIVAGGGVALIRAQKALDGLTGENDDQNHGIALLRKAIEAPLRQIVSNAGGESSVVVNQVKANQGNYGYNAANDTYGDMVEMGILDPTKVTRSALQHAASIAGLMITTEAMVGEIKEAAPAMPMGGGMGGMPGMM.

ATP-binding positions include 30-33 (TLGP), lysine 51, 87-91 (DGTTT), glycine 415, 479-481 (NAA), and aspartate 495.

The protein belongs to the chaperonin (HSP60) family. In terms of assembly, forms a cylinder of 14 subunits composed of two heptameric rings stacked back-to-back. Interacts with the co-chaperonin GroES.

It is found in the cytoplasm. The enzyme catalyses ATP + H2O + a folded polypeptide = ADP + phosphate + an unfolded polypeptide.. Functionally, together with its co-chaperonin GroES, plays an essential role in assisting protein folding. The GroEL-GroES system forms a nano-cage that allows encapsulation of the non-native substrate proteins and provides a physical environment optimized to promote and accelerate protein folding. The protein is Chaperonin GroEL of Francisella tularensis subsp. novicida (strain U112).